The primary structure comprises 137 residues: Putative pre-16S rRNA nuclease (137 aa).

Belongs to the YqgF nuclease family.

Its subcellular location is the cytoplasm. In terms of biological role, could be a nuclease involved in processing of the 5'-end of pre-16S rRNA. The chain is Putative pre-16S rRNA nuclease from Clostridium botulinum (strain Eklund 17B / Type B).